The chain runs to 476 residues: Arginine biosynthesis bifunctional protein ArgJ, mitochondrial (476 aa).

The substrate site is built by Thr-193, Lys-219, Thr-237, Glu-337, Asn-471, and Ser-476. Thr-237 (nucleophile) is an active-site residue.

Belongs to the ArgJ family. In terms of assembly, heterodimer of an alpha and a beta chain. The alpha and beta chains are autoproteolytically processed from a single precursor protein within the mitochondrion.

The protein resides in the mitochondrion matrix. The enzyme catalyses N(2)-acetyl-L-ornithine + L-glutamate = N-acetyl-L-glutamate + L-ornithine. It carries out the reaction L-glutamate + acetyl-CoA = N-acetyl-L-glutamate + CoA + H(+). The protein operates within amino-acid biosynthesis; L-arginine biosynthesis; L-ornithine and N-acetyl-L-glutamate from L-glutamate and N(2)-acetyl-L-ornithine (cyclic): step 1/1. Its pathway is amino-acid biosynthesis; L-arginine biosynthesis; N(2)-acetyl-L-ornithine from L-glutamate: step 1/4. Its function is as follows. Catalyzes two activities which are involved in the cyclic version of arginine biosynthesis: the synthesis of acetylglutamate from glutamate and acetyl-CoA, and of ornithine by transacetylation between acetylornithine and glutamate. The polypeptide is Arginine biosynthesis bifunctional protein ArgJ, mitochondrial (Cryptococcus neoformans var. neoformans serotype D (strain JEC21 / ATCC MYA-565) (Filobasidiella neoformans)).